Here is a 129-residue protein sequence, read N- to C-terminus: Succinate dehydrogenase cytochrome b556 subunit (129 aa).

Topologically, residues 1–26 (MIRNVKKQRPVNLDLQTIRFPITAIA) are cytoplasmic. The helical transmembrane segment at 27-52 (SILHRVSGVITFVAVGILLWLLGTSL) threads the bilayer. The Periplasmic segment spans residues 53-68 (SSPEGFEQASAIMGSF). Residues 69–89 (FVKFIMWGILTALAYHVVVGI) traverse the membrane as a helical segment. His-84 provides a ligand contact to heme. The Cytoplasmic segment spans residues 90 to 108 (RHMMMDFGYLEETFEAGKR). The helical transmembrane segment at 109-129 (SAKISFVITVVLSLLAGVLVW) threads the bilayer.

This sequence belongs to the cytochrome b560 family. As to quaternary structure, part of an enzyme complex containing four subunits: a flavoprotein, an iron-sulfur protein, plus two membrane-anchoring proteins, SdhC and SdhD. The complex can form homotrimers. The cofactor is heme.

It is found in the cell inner membrane. It functions in the pathway carbohydrate metabolism; tricarboxylic acid cycle. Membrane-anchoring subunit of succinate dehydrogenase (SDH). The protein is Succinate dehydrogenase cytochrome b556 subunit (sdhC) of Escherichia coli O157:H7.